The chain runs to 390 residues: Pyruvate dehydrogenase E1 component subunit alpha-1, mitochondrial (390 aa).

The transit peptide at 1 to 15 directs the protein to the mitochondrion; that stretch reads MAAAILLRRVPPARA. Pyruvate-binding residues include histidine 91, tyrosine 117, arginine 118, glycine 166, valine 168, aspartate 197, glycine 198, alanine 199, asparagine 226, and tyrosine 228. Thiamine diphosphate contacts are provided by tyrosine 117, arginine 118, glycine 166, valine 168, aspartate 197, glycine 198, alanine 199, and asparagine 226. Position 197 (aspartate 197) interacts with Mg(2+). Mg(2+)-binding residues include asparagine 226 and tyrosine 228. Position 292 (histidine 292) interacts with thiamine diphosphate. Residues 293–312 form a disordered region; it reads SMSDPGSTYRTRDEISGVRQ. Basic and acidic residues predominate over residues 302–312; it reads RTRDEISGVRQ.

Tetramer of 2 alpha and 2 beta subunits. It depends on thiamine diphosphate as a cofactor. Mg(2+) serves as cofactor.

It localises to the mitochondrion matrix. It catalyses the reaction N(6)-[(R)-lipoyl]-L-lysyl-[protein] + pyruvate + H(+) = N(6)-[(R)-S(8)-acetyldihydrolipoyl]-L-lysyl-[protein] + CO2. Its function is as follows. The pyruvate dehydrogenase complex catalyzes the overall conversion of pyruvate to acetyl-CoA and CO(2). It contains multiple copies of three enzymatic components: pyruvate dehydrogenase (E1), dihydrolipoamide acetyltransferase (E2) and lipoamide dehydrogenase (E3). This Oryza sativa subsp. japonica (Rice) protein is Pyruvate dehydrogenase E1 component subunit alpha-1, mitochondrial.